A 1187-amino-acid chain; its full sequence is Serine/threonine-protein kinase SIK3 homolog (1187 aa).

Positions 1 to 15 (MAAVSSGAAAAAGIP) are enriched in low complexity. Residues 1-41 (MAAVSSGAAAAAGIPNPNPNRERPQQQQQQQPASAALHPVA) are disordered. Residues 59-310 (YEMERTIGKG…MEQICKNKWM (252 aa)) form the Protein kinase domain. Residues 65–73 (IGKGNFAVV) and K88 each bind ATP. Catalysis depends on D181, which acts as the Proton acceptor. T214 bears the Phosphothreonine mark. S218 carries the phosphoserine modification. Residues 337–377 (LINEQVLMAMAEMGFDRERTLQSLHADSYDHYSATYSLLSD) enclose the UBA domain. Disordered stretches follow at residues 548-587 (LKRP…VQRS), 697-776 (IQPS…PPGS), and 1060-1092 (CADA…GALQ). A compositionally biased stretch (acidic residues) spans 570–581 (VDEEGSDAEPDP). Residues 739–749 (VQYQHGSALYQ) are compositionally biased toward polar residues.

This sequence belongs to the protein kinase superfamily. CAMK Ser/Thr protein kinase family. SNF1 subfamily. Mg(2+) is required as a cofactor.

It carries out the reaction L-seryl-[protein] + ATP = O-phospho-L-seryl-[protein] + ADP + H(+). The catalysed reaction is L-threonyl-[protein] + ATP = O-phospho-L-threonyl-[protein] + ADP + H(+). The chain is Serine/threonine-protein kinase SIK3 homolog from Danio rerio (Zebrafish).